Consider the following 348-residue polypeptide: Killer cell immunoglobulin-like receptor 2DL1 (348 aa).

The N-terminal stretch at 1-21 (MSLLVVSMACVGFFLLQGAWP) is a signal peptide. Residues 22 to 245 (HEGVHRKPSL…SKTGNPRHLH (224 aa)) are Extracellular-facing. 2 consecutive Ig-like C2-type domains span residues 42-107 (EETV…VTHS) and 142-205 (GENV…FHDS). An intrachain disulfide couples Cys49 to Cys100. Residues Asn67, Asn84, Asn144, and Asn178 are each glycosylated (N-linked (GlcNAc...) asparagine). A disulfide bridge links Cys149 with Cys198. Positions 220–239 (VTGNPSNSWPSPTEPSSKTG) are disordered. Residues 246–264 (ILIGTSVVIILFILLFFLL) form a helical membrane-spanning segment. The Cytoplasmic portion of the chain corresponds to 265 to 348 (HRWCSNKKNA…ESRSKVVSCP (84 aa)).

It belongs to the immunoglobulin superfamily. In terms of assembly, interacts with ARRB2. Interacts with PTPN6; the interaction is enhanced by ARRB2. Interacts with PTPN11; the interaction is enhanced by ARRB2. In terms of tissue distribution, expressed by NK cells.

It localises to the cell membrane. Its function is as follows. Receptor on natural killer (NK) cells for some HLA-C alleles such as w4 and w6. Inhibits the activity of NK cells thus preventing cell lysis. This Homo sapiens (Human) protein is Killer cell immunoglobulin-like receptor 2DL1.